Consider the following 430-residue polypeptide: N-lysine methyltransferase SMYD2-B (430 aa).

Positions 5–239 (EGLERFDSPG…AGEEVFTSYI (235 aa)) constitute an SET domain. 15-17 (KGR) contributes to the S-adenosyl-L-methionine binding site. Zn(2+) is bound by residues C50, C53, C63, C66, C72, C76, H84, and C88. The segment at 50–88 (CDFCFTRKEGLSKCGKCKQAFYCNVDCQKGDWPMHKLEC) adopts an MYND-type zinc-finger fold. S-adenosyl-L-methionine contacts are provided by residues H135, 204–205 (NH), and 256–258 (YFF).

Belongs to the class V-like SAM-binding methyltransferase superfamily.

The protein resides in the cytoplasm. It is found in the cytosol. The protein localises to the nucleus. The catalysed reaction is L-lysyl(4)-[histone H3] + 3 S-adenosyl-L-methionine = N(6),N(6),N(6)-trimethyl-L-lysyl(4)-[histone H3] + 3 S-adenosyl-L-homocysteine + 3 H(+). It catalyses the reaction L-lysyl-[protein] + S-adenosyl-L-methionine = N(6)-methyl-L-lysyl-[protein] + S-adenosyl-L-homocysteine + H(+). Its function is as follows. Protein-lysine N-methyltransferase that methylates both histones and non-histone proteins, including p53/TP53 and RB1. Specifically trimethylates histone H3 'Lys-4' (H3K4me3) in vivo. The activity requires interaction with HSP90alpha. Shows even higher methyltransferase activity on p53/TP53. Monomethylates 'Lys-370' of p53/TP53, leading to decreased DNA-binding activity and subsequent transcriptional regulation activity of p53/TP53. Monomethylates RB1 at 'Lys-860'. This is N-lysine methyltransferase SMYD2-B (smyd2-b) from Xenopus laevis (African clawed frog).